Reading from the N-terminus, the 164-residue chain is ATP synthase subunit b (164 aa).

The helical transmembrane segment at 6 to 26 threads the bilayer; that stretch reads GELIGNFILITGSFILLLVLI.

It belongs to the ATPase B chain family. F-type ATPases have 2 components, F(1) - the catalytic core - and F(0) - the membrane proton channel. F(1) has five subunits: alpha(3), beta(3), gamma(1), delta(1), epsilon(1). F(0) has three main subunits: a(1), b(2) and c(10-14). The alpha and beta chains form an alternating ring which encloses part of the gamma chain. F(1) is attached to F(0) by a central stalk formed by the gamma and epsilon chains, while a peripheral stalk is formed by the delta and b chains.

The protein resides in the cell membrane. Functionally, f(1)F(0) ATP synthase produces ATP from ADP in the presence of a proton or sodium gradient. F-type ATPases consist of two structural domains, F(1) containing the extramembraneous catalytic core and F(0) containing the membrane proton channel, linked together by a central stalk and a peripheral stalk. During catalysis, ATP synthesis in the catalytic domain of F(1) is coupled via a rotary mechanism of the central stalk subunits to proton translocation. In terms of biological role, component of the F(0) channel, it forms part of the peripheral stalk, linking F(1) to F(0). In Streptococcus pneumoniae serotype 2 (strain D39 / NCTC 7466), this protein is ATP synthase subunit b.